Reading from the N-terminus, the 251-residue chain is HTH-type transcriptional regulator UlaR (251 aa).

Residues 3-58 (EAQRHQILLEMLAQLGFVTVEKVVERLGISPATARRDINKLDESGKLKKVRNGAEA) form the HTH deoR-type domain. The H-T-H motif DNA-binding region spans 20-39 (VTVEKVVERLGISPATARRD).

It is found in the cytoplasm. Represses ulaG and the ulaABCDEF operon. In Escherichia coli O139:H28 (strain E24377A / ETEC), this protein is HTH-type transcriptional regulator UlaR.